Here is a 539-residue protein sequence, read N- to C-terminus: 2-isopropylmalate synthase (539 aa).

The Pyruvate carboxyltransferase domain occupies 8–269; it reads VLIFDTTLRD…YFNPFFGRPP (262 aa). Mn(2+)-binding residues include Asp17, His208, His210, and Asn244. A regulatory domain region spans residues 408–539; the sequence is QLKLVQVSCG…DLAKVEKKGI (132 aa).

This sequence belongs to the alpha-IPM synthase/homocitrate synthase family. LeuA type 1 subfamily. As to quaternary structure, homodimer. It depends on Mn(2+) as a cofactor.

It is found in the cytoplasm. It catalyses the reaction 3-methyl-2-oxobutanoate + acetyl-CoA + H2O = (2S)-2-isopropylmalate + CoA + H(+). Its pathway is amino-acid biosynthesis; L-leucine biosynthesis; L-leucine from 3-methyl-2-oxobutanoate: step 1/4. Its function is as follows. Catalyzes the condensation of the acetyl group of acetyl-CoA with 3-methyl-2-oxobutanoate (2-ketoisovalerate) to form 3-carboxy-3-hydroxy-4-methylpentanoate (2-isopropylmalate). This chain is 2-isopropylmalate synthase, found in Prochlorococcus marinus (strain NATL2A).